We begin with the raw amino-acid sequence, 96 residues long: UPF0235 protein YggU (96 aa).

Belongs to the UPF0235 family.

The chain is UPF0235 protein YggU from Salmonella newport (strain SL254).